A 699-amino-acid polypeptide reads, in one-letter code: MQKSRDIKRTGVYRVSGNIGDLQLELKLRHISEWLPVPKFEYAGAQSTNAYGDHYPGSEEDIWQDCYIHVPQGDDSCGGKTGLGYNCSYYNVGIGYTGRRRRSPISQHEGEMEKDKNEGEITDLESQSNRSWSILSDNSRPPAGDLFYKRNKELCNGAIATIRISWQQKHFSQAELEQYINNPGSCASKLQRRYHRWALETLKLQQRYLRKLENLEDAETVEDPEPITIRRRIRKPKAKQRGCSAAAHPTITSLSSANMSEVSILDDPNFAARTCLIHTLLDNDSESLMPAEASEFHKKGYQLMYIYADLQQDTLLVSIRYDPEQGLLYVYPDFSSSAQDLDYVIQIERNNDCRQLYAFGFENVTPLEAYDDDGFSEEADGEDEQELGDGLPIEEDLPEEASAEEILEFYRRRREAASERRSLLQFEMPPKRMKRVSLLLELQEGQNFENPNIHVRYYLKAPANTFYEGTPGVDTMQGATATCRNAGDWRSAHLGHCWQVTLLLEEQHHPADLLHLYFEVISIDSWQRERCEGYAHYAIPLTSALPTDSIRLQCIRPLGNWLDALNRYFIGGRQLFDFESFFDVHRQSEMHSRLNFNSDRPMTTTGTLSLRLQKLQQRQIDTSDQFHHHFHLELGNDSSDDGDSNDDDVRSSSNPDTSRATTLDEVMAAFVEARKRIELLLGNSSETASPSSAYYQAEF.

2 disordered regions span residues 101 to 121 and 373 to 396; these read RRSPISQHEGEMEKDKNEGEI and DGFSEEADGEDEQELGDGLPIEED. Over residues 108–119 the composition is skewed to basic and acidic residues; that stretch reads HEGEMEKDKNEG. The 127-residue stretch at 434 to 560 folds into the C2 B9-type domain; that stretch reads KRVSLLLELQ…RLQCIRPLGN (127 aa). A disordered region spans residues 632 to 661; that stretch reads LELGNDSSDDGDSNDDDVRSSSNPDTSRAT.

Probable component of the tectonic-like complex (also named MKS complex), composed of B9d1, B9d2, Cc2d2a, Mks1 and tctn. Expressed in chordotonal neurons in the antennae (at protein level). Expressed in spermatids (at protein level).

It localises to the cytoplasm. The protein localises to the cytoskeleton. The protein resides in the cilium basal body. It is found in the microtubule organizing center. Its subcellular location is the centrosome. It localises to the centriole. Its function is as follows. Probable component of the tectonic-like complex (also named MKS complex), a complex localized at the transition zone of primary cilia. Required for ciliary structure and function. In Drosophila melanogaster (Fruit fly), this protein is Tectonic-like complex member Mks1.